The sequence spans 159 residues: Cytochrome c-type biogenesis protein CcmE (159 aa).

Topologically, residues methionine 1 to arginine 8 are cytoplasmic. A helical; Signal-anchor for type II membrane protein transmembrane segment spans residues leucine 9–alanine 29. At leucine 30–serine 159 the chain is on the periplasmic side. Residues histidine 130 and tyrosine 134 each coordinate heme. The segment covering glutamate 132–histidine 147 has biased composition (basic and acidic residues). The segment at glutamate 132 to serine 159 is disordered.

It belongs to the CcmE/CycJ family.

The protein localises to the cell inner membrane. In terms of biological role, heme chaperone required for the biogenesis of c-type cytochromes. Transiently binds heme delivered by CcmC and transfers the heme to apo-cytochromes in a process facilitated by CcmF and CcmH. The sequence is that of Cytochrome c-type biogenesis protein CcmE from Shigella sonnei (strain Ss046).